Consider the following 208-residue polypeptide: Thymidylate kinase (208 aa).

10 to 17 is an ATP binding site; it reads GPDGSGKT.

The protein belongs to the thymidylate kinase family.

It carries out the reaction dTMP + ATP = dTDP + ADP. Functionally, phosphorylation of dTMP to form dTDP in both de novo and salvage pathways of dTTP synthesis. This is Thymidylate kinase from Listeria monocytogenes serotype 4a (strain HCC23).